The following is a 493-amino-acid chain: Aspartyl/glutamyl-tRNA(Asn/Gln) amidotransferase subunit B (493 aa).

Residues 473–493 are disordered; it reads KSGGKANPKQAADLVNKRLTE.

This sequence belongs to the GatB/GatE family. GatB subfamily. In terms of assembly, heterotrimer of A, B and C subunits.

The catalysed reaction is L-glutamyl-tRNA(Gln) + L-glutamine + ATP + H2O = L-glutaminyl-tRNA(Gln) + L-glutamate + ADP + phosphate + H(+). It carries out the reaction L-aspartyl-tRNA(Asn) + L-glutamine + ATP + H2O = L-asparaginyl-tRNA(Asn) + L-glutamate + ADP + phosphate + 2 H(+). Functionally, allows the formation of correctly charged Asn-tRNA(Asn) or Gln-tRNA(Gln) through the transamidation of misacylated Asp-tRNA(Asn) or Glu-tRNA(Gln) in organisms which lack either or both of asparaginyl-tRNA or glutaminyl-tRNA synthetases. The reaction takes place in the presence of glutamine and ATP through an activated phospho-Asp-tRNA(Asn) or phospho-Glu-tRNA(Gln). This is Aspartyl/glutamyl-tRNA(Asn/Gln) amidotransferase subunit B from Treponema denticola (strain ATCC 35405 / DSM 14222 / CIP 103919 / JCM 8153 / KCTC 15104).